Reading from the N-terminus, the 130-residue chain is Large ribosomal subunit protein bL12 (130 aa).

Belongs to the bacterial ribosomal protein bL12 family. Homodimer. Part of the ribosomal stalk of the 50S ribosomal subunit. Forms a multimeric L10(L12)X complex, where L10 forms an elongated spine to which 2 to 4 L12 dimers bind in a sequential fashion. Binds GTP-bound translation factors.

Functionally, forms part of the ribosomal stalk which helps the ribosome interact with GTP-bound translation factors. Is thus essential for accurate translation. This Chlamydia trachomatis serovar L2 (strain ATCC VR-902B / DSM 19102 / 434/Bu) protein is Large ribosomal subunit protein bL12.